The chain runs to 130 residues: MNLIAKLEQEEIERALAGKTIPEFAPGDTVIVNVNVVEGTRKRVQAYEGVVIAIRNRGLNSNFIVRKISSGEGVERTFQTYSPLLASIVVKRRGDVRRAKLYYLRERSGKSARIKEKLVSKDRTAAASQE.

Belongs to the bacterial ribosomal protein bL19 family.

This protein is located at the 30S-50S ribosomal subunit interface and may play a role in the structure and function of the aminoacyl-tRNA binding site. The sequence is that of Large ribosomal subunit protein bL19 from Burkholderia ambifaria (strain ATCC BAA-244 / DSM 16087 / CCUG 44356 / LMG 19182 / AMMD) (Burkholderia cepacia (strain AMMD)).